Reading from the N-terminus, the 234-residue chain is Elongation factor Tu (234 aa).

The tr-type G domain maps to 1-125; sequence KNMITGAAQM…EVDAFIPTPE (125 aa). GTP is bound at residue 47–50; that stretch reads NKQD.

The protein belongs to the TRAFAC class translation factor GTPase superfamily. Classic translation factor GTPase family. EF-Tu/EF-1A subfamily. In terms of assembly, monomer.

The protein localises to the cytoplasm. It catalyses the reaction GTP + H2O = GDP + phosphate + H(+). GTP hydrolase that promotes the GTP-dependent binding of aminoacyl-tRNA to the A-site of ribosomes during protein biosynthesis. The chain is Elongation factor Tu (tufA) from Prochlorothrix hollandica.